A 208-amino-acid chain; its full sequence is MSGNLRTRRTVRHSRALGIALTPKAEKYMERRPYGPGQHGRARRKQDSDYAVRLKEKQRLRAQYNIREAQMRRYFEEAKRTAGLTGENLVELLEQRLDALVLRAGFARTIQQARQLVVHRHIMVDGKRVDVPSFRVKEGQMIHVHERSEKMVPFQLAAAGAHQQVLPATPGYLTVEIEKLRATLTRRPKRSEVPVTCEEQLVVEYYAR.

The disordered stretch occupies residues 29–48 (MERRPYGPGQHGRARRKQDS). In terms of domain architecture, S4 RNA-binding spans 95-155 (QRLDALVLRA…ERSEKMVPFQ (61 aa)).

It belongs to the universal ribosomal protein uS4 family. As to quaternary structure, part of the 30S ribosomal subunit. Contacts protein S5. The interaction surface between S4 and S5 is involved in control of translational fidelity.

One of the primary rRNA binding proteins, it binds directly to 16S rRNA where it nucleates assembly of the body of the 30S subunit. Functionally, with S5 and S12 plays an important role in translational accuracy. The chain is Small ribosomal subunit protein uS4 from Micrococcus luteus (strain ATCC 4698 / DSM 20030 / JCM 1464 / CCM 169 / CCUG 5858 / IAM 1056 / NBRC 3333 / NCIMB 9278 / NCTC 2665 / VKM Ac-2230) (Micrococcus lysodeikticus).